The sequence spans 769 residues: Glutathione biosynthesis bifunctional protein GshAB (769 aa).

Residues M1–I347 form a glutamate--cysteine ligase region. The ATP-grasp domain occupies K514–F768. S541–R599 contributes to the ATP binding site. Residues D721, E738, and N740 each coordinate Mg(2+). Residues D721, E738, and N740 each contribute to the Mn(2+) site.

It in the N-terminal section; belongs to the glutamate--cysteine ligase type 1 family. Type 2 subfamily. As to quaternary structure, monomer. Mg(2+) serves as cofactor. The cofactor is Mn(2+).

It carries out the reaction L-cysteine + L-glutamate + ATP = gamma-L-glutamyl-L-cysteine + ADP + phosphate + H(+). It catalyses the reaction gamma-L-glutamyl-L-cysteine + glycine + ATP = glutathione + ADP + phosphate + H(+). Its pathway is sulfur metabolism; glutathione biosynthesis; glutathione from L-cysteine and L-glutamate: step 1/2. The protein operates within sulfur metabolism; glutathione biosynthesis; glutathione from L-cysteine and L-glutamate: step 2/2. In terms of biological role, synthesizes glutathione from L-glutamate and L-cysteine via gamma-L-glutamyl-L-cysteine. In Listeria monocytogenes serotype 4b (strain F2365), this protein is Glutathione biosynthesis bifunctional protein GshAB.